The chain runs to 241 residues: Probable transcriptional regulatory protein Reut_A2522 (241 aa).

It belongs to the TACO1 family.

It is found in the cytoplasm. The chain is Probable transcriptional regulatory protein Reut_A2522 from Cupriavidus pinatubonensis (strain JMP 134 / LMG 1197) (Cupriavidus necator (strain JMP 134)).